A 130-amino-acid polypeptide reads, in one-letter code: MSSFEYPQDLRYLDTHEYVRLDGEIATIGITEFAVDQLGDVVFLELPDIGDLLTKGDTFGSIESVKAVENLNAPITGTVVERNEILVESPEAVADDPYGEGWFLKVRVNDPDEVNDALTADEYRAEVEGE.

The Lipoyl-binding domain maps to 25-107; the sequence is IATIGITEFA…YGEGWFLKVR (83 aa). At K66 the chain carries N6-lipoyllysine.

This sequence belongs to the GcvH family. As to quaternary structure, the glycine cleavage system is composed of four proteins: P, T, L and H. (R)-lipoate is required as a cofactor.

Functionally, the glycine cleavage system catalyzes the degradation of glycine. The H protein shuttles the methylamine group of glycine from the P protein to the T protein. This chain is Glycine cleavage system H protein, found in Nostoc sp. (strain PCC 7120 / SAG 25.82 / UTEX 2576).